The sequence spans 142 residues: MVLSANDKTNVKNVFTKISGHAEDYGAEALERMFTTYPPTKTYFPHFDLHHGSAQIKAHGKKVVGALIEAVNHIDDMAGALSKLSDLHAQKLRVDPVNFKLLGQCFLVVVAIHHPSVLTPEVHASLDKFLCAVGNVLTAKYR.

The Globin domain occupies valine 2 to arginine 142. Histidine 59 contacts O2. Histidine 88 contributes to the heme b binding site.

It belongs to the globin family. In terms of assembly, heterotetramer of two alpha chains and two beta chains. As to expression, red blood cells.

Its function is as follows. Involved in oxygen transport from the lung to the various peripheral tissues. The protein is Hemoglobin subunit alpha-A (HBAA) of Aquila chrysaetos (Golden eagle).